We begin with the raw amino-acid sequence, 423 residues long: Serine--tRNA ligase 2 (423 aa).

231–233 serves as a coordination point for L-serine; it reads TAE. 262 to 264 serves as a coordination point for ATP; that stretch reads RSE. Glu-285 contributes to the L-serine binding site. Residue 349 to 352 participates in ATP binding; sequence EISS. Position 384 (Ser-384) interacts with L-serine.

It belongs to the class-II aminoacyl-tRNA synthetase family. Type-1 seryl-tRNA synthetase subfamily. As to quaternary structure, homodimer. The tRNA molecule binds across the dimer.

Its subcellular location is the cytoplasm. It carries out the reaction tRNA(Ser) + L-serine + ATP = L-seryl-tRNA(Ser) + AMP + diphosphate + H(+). The catalysed reaction is tRNA(Sec) + L-serine + ATP = L-seryl-tRNA(Sec) + AMP + diphosphate + H(+). The protein operates within aminoacyl-tRNA biosynthesis; selenocysteinyl-tRNA(Sec) biosynthesis; L-seryl-tRNA(Sec) from L-serine and tRNA(Sec): step 1/1. Its function is as follows. Catalyzes the attachment of serine to tRNA(Ser). Is also able to aminoacylate tRNA(Sec) with serine, to form the misacylated tRNA L-seryl-tRNA(Sec), which will be further converted into selenocysteinyl-tRNA(Sec). This Enterococcus faecalis (strain ATCC 700802 / V583) protein is Serine--tRNA ligase 2.